We begin with the raw amino-acid sequence, 132 residues long: Flagellar basal body rod protein FlgB (132 aa).

It belongs to the flagella basal body rod proteins family. As to quaternary structure, the basal body constitutes a major portion of the flagellar organelle and consists of a number of rings mounted on a central rod. In Gram-negative bacteria, at least four rings, L, P, S and M are present, whereas Gram-positive bacteria lack the L and P rings. The rod consists of about 26 subunits of FlgG in the distal portion, and FlgB, FlgC and FlgF build up the proximal portion of the rod with about 6 subunits each. Rod assembly occurs by export via the flagellum-specific pathway of its constituent proteins and by their incorporation into the rod structure in the probable order of FlgB, FlgC, FlgF and FlgG. Another protein, FliE, also assembles onto the stable rod structure.

The protein localises to the bacterial flagellum basal body. Structural component of flagellum, the bacterial motility apparatus. Part of the rod structure of flagellar basal body. This chain is Flagellar basal body rod protein FlgB, found in Aeromonas hydrophila.